The chain runs to 420 residues: Calreticulin (420 aa).

The first 25 residues, 1–25, serve as a signal peptide directing secretion; it reads MAIRKGSSYAVAALLALASVAAVAG. Residue Asn-57 is glycosylated (N-linked (GlcNAc...) asparagine). The an alpha-D-glucoside site is built by Tyr-115, Lys-117, Tyr-134, and Asp-141. 7 repeat units span residues 197–208, 216–227, 233–244, 251–262, 266–276, 280–290, and 294–304. The interval 197–262 is 4 X approximate repeats; that stretch reads KHTGSIYEHW…DAKKPEDWDD (66 aa). Residues 213–258 are compositionally biased toward basic and acidic residues; sequence KIKDPEAKKPEDWDDKEYIPDPEDKKPEGYDDIPKEIPDPDAKKPE. The segment at 213–285 is disordered; that stretch reads KIKDPEAKKP…PEYKGPWKQK (73 aa). The interval 266 to 304 is 3 X approximate repeats; it reads GEWTAPTIPNPEYKGPWKQKKIKNPNYQGKWKAPMIDNP. Glu-324 lines the an alpha-D-glucoside pocket. Positions 355 to 381 are enriched in basic and acidic residues; it reads GKHKEAEKAAFDEAEKKKEEEDAAKGG. Residues 355–420 form a disordered region; sequence GKHKEAEKAA…DSDDEKHDEL (66 aa). Acidic residues predominate over residues 382–402; it reads DDEDDDLEDEEDDEKADEDKA. A compositionally biased stretch (basic and acidic residues) spans 403–420; that stretch reads DSDAEDGKDSDDEKHDEL. Positions 417 to 420 match the Prevents secretion from ER motif; it reads HDEL.

It belongs to the calreticulin family.

The protein resides in the endoplasmic reticulum lumen. In terms of biological role, molecular calcium-binding chaperone promoting folding, oligomeric assembly and quality control in the ER via the calreticulin/calnexin cycle. This lectin may interact transiently with almost all of the monoglucosylated glycoproteins that are synthesized in the ER. The chain is Calreticulin (CRT) from Zea mays (Maize).